The chain runs to 402 residues: Candidapepsin-1 (402 aa).

The segment at residues 1 to 25 (MVAIVTLTRQVLLTIALALFAQGAA) is a signal peptide (or 18, or 21). Residues 26 to 62 (IPEEAAKRDDNPGFVALDFDVLRKPLNLTEALLREKR) constitute a propeptide, activation peptide. Asn-52 is a glycosylation site (N-linked (GlcNAc...) asparagine). Residues 76–389 (YASKVSVGSN…NLDANTISIA (314 aa)) enclose the Peptidase A1 domain. Residue Asp-94 is part of the active site. A disulfide bridge links Cys-109 with Cys-115. Residue Asp-282 is part of the active site. Cys-320 and Cys-354 are disulfide-bonded.

It belongs to the peptidase A1 family. O-glycosylated.

It is found in the secreted. The catalysed reaction is Preferential cleavage at the carboxyl of hydrophobic amino acids, but fails to cleave 15-Leu-|-Tyr-16, 16-Tyr-|-Leu-17 and 24-Phe-|-Phe-25 of insulin B chain. Activates trypsinogen, and degrades keratin.. This is Candidapepsin-1 (SAPP1) from Candida parapsilosis (Yeast).